Reading from the N-terminus, the 344-residue chain is Sorting nexin-16 (344 aa).

Residues 1-10 (MATPYVPVPM) are compositionally biased toward pro residues. The tract at residues 1-72 (MATPYVPVPM…SASSMCGSPL (72 aa)) is disordered. The segment covering 14–26 (NSASSFTNNRNQR) has biased composition (polar residues). The span at 27–40 (SSSFGSVSTSSTSS) shows a compositional bias: low complexity. Positions 52 to 68 (LKQTNVQDQMDSASSMC) are enriched in polar residues. Residues 105-218 (DRPSTPTILG…EFLCLDDPPG (114 aa)) enclose the PX domain. A 1,2-diacyl-sn-glycero-3-phospho-(1D-myo-inositol-3-phosphate) is bound by residues arginine 144, threonine 146, and arginine 184. At serine 222 the chain carries Phosphoserine. Residues 223–278 (LEESRAFCETLEETNYHLQRELLEKQKEVESLKKLLGEKQLHIDALETRIRTLSLE) adopt a coiled-coil conformation.

Belongs to the sorting nexin family. In terms of assembly, homooligomer. Interacts with EGFR.

The protein localises to the early endosome membrane. It localises to the late endosome membrane. It is found in the cytoplasm. The protein resides in the lysosome. Its function is as follows. May be involved in several stages of intracellular trafficking. Plays a role in protein transport from early to late endosomes. Plays a role in protein transport to the lysosome. Promotes degradation of EGFR after EGF signaling. This Mus musculus (Mouse) protein is Sorting nexin-16 (Snx16).